We begin with the raw amino-acid sequence, 230 residues long: Flagellar L-ring protein (230 aa).

Positions 1-18 (MNRLNIAVSCLATALLFG) are cleaved as a signal peptide. A lipid anchor (N-palmitoyl cysteine) is attached at cysteine 19. Residue cysteine 19 is the site of S-diacylglycerol cysteine attachment.

The protein belongs to the FlgH family. As to quaternary structure, the basal body constitutes a major portion of the flagellar organelle and consists of four rings (L,P,S, and M) mounted on a central rod.

It localises to the cell outer membrane. Its subcellular location is the bacterial flagellum basal body. Assembles around the rod to form the L-ring and probably protects the motor/basal body from shearing forces during rotation. The sequence is that of Flagellar L-ring protein from Legionella pneumophila (strain Paris).